The chain runs to 77 residues: Putative antitoxin MazE7 (77 aa).

A disordered region spans residues arginine 49–glycine 77.

In terms of assembly, forms a complex with cognate toxin MazF7.

Its function is as follows. Antitoxin component of a type II toxin-antitoxin (TA) system. This chain is Putative antitoxin MazE7 (mazE7), found in Mycobacterium tuberculosis (strain CDC 1551 / Oshkosh).